Consider the following 262-residue polypeptide: Thiazole synthase (262 aa).

Lys104 serves as the catalytic Schiff-base intermediate with DXP. Residues Gly165, 191-192 (AG), and 213-214 (NT) contribute to the 1-deoxy-D-xylulose 5-phosphate site.

It belongs to the ThiG family. As to quaternary structure, homotetramer. Forms heterodimers with either ThiH or ThiS.

Its subcellular location is the cytoplasm. It catalyses the reaction [ThiS sulfur-carrier protein]-C-terminal-Gly-aminoethanethioate + 2-iminoacetate + 1-deoxy-D-xylulose 5-phosphate = [ThiS sulfur-carrier protein]-C-terminal Gly-Gly + 2-[(2R,5Z)-2-carboxy-4-methylthiazol-5(2H)-ylidene]ethyl phosphate + 2 H2O + H(+). Its pathway is cofactor biosynthesis; thiamine diphosphate biosynthesis. Functionally, catalyzes the rearrangement of 1-deoxy-D-xylulose 5-phosphate (DXP) to produce the thiazole phosphate moiety of thiamine. Sulfur is provided by the thiocarboxylate moiety of the carrier protein ThiS. In vitro, sulfur can be provided by H(2)S. The sequence is that of Thiazole synthase from Nitrosococcus oceani (strain ATCC 19707 / BCRC 17464 / JCM 30415 / NCIMB 11848 / C-107).